Here is a 101-residue protein sequence, read N- to C-terminus: Interleukin-8 (101 aa).

A signal peptide spans 1 to 22 (MTSKLVVALLAAFMLSAALCEA). Position 27 is a citrulline (R27). Intrachain disulfides connect C34–C61 and C36–C77.

It belongs to the intercrine alpha (chemokine CxC) family. Homodimer. Interacts with TNFAIP6 (via Link domain); this interaction interferes with chemokine binding to glycosaminoglycans. Post-translationally, citrullination at Arg-27 prevents proteolysis, and dampens tissue inflammation, it also enhances leukocytosis, possibly through impaired chemokine clearance from the blood circulation.

It localises to the secreted. Its function is as follows. Chemotactic factor that mediates inflammatory response by attracting neutrophils, basophils, and T-cells to clear pathogens and protect the host from infection. Also plays an important role in neutrophil activation. Released in response to an inflammatory stimulus, exerts its effect by binding to the G-protein-coupled receptors CXCR1 and CXCR2, primarily found in neutrophils, monocytes and endothelial cells. G-protein heterotrimer (alpha, beta, gamma subunits) constitutively binds to CXCR1/CXCR2 receptor and activation by IL8 leads to beta and gamma subunits release from Galpha (GNAI2 in neutrophils) and activation of several downstream signaling pathways including PI3K and MAPK pathways. The sequence is that of Interleukin-8 (CXCL8) from Felis catus (Cat).